A 160-amino-acid chain; its full sequence is Protein-export protein SecB (160 aa).

It belongs to the SecB family. As to quaternary structure, homotetramer, a dimer of dimers. One homotetramer interacts with 1 SecA dimer.

It is found in the cytoplasm. One of the proteins required for the normal export of preproteins out of the cell cytoplasm. It is a molecular chaperone that binds to a subset of precursor proteins, maintaining them in a translocation-competent state. It also specifically binds to its receptor SecA. The protein is Protein-export protein SecB of Azorhizobium caulinodans (strain ATCC 43989 / DSM 5975 / JCM 20966 / LMG 6465 / NBRC 14845 / NCIMB 13405 / ORS 571).